The primary structure comprises 287 residues: 4-hydroxybenzoate octaprenyltransferase (287 aa).

A run of 5 helical transmembrane segments spans residues 35–55 (FAAGGLPDLKVFIIFVIGVVV), 96–116 (LFGVMGLFAFSLVLMLNPLVV), 211–231 (IIAAFQLAALSCFIIAGMLAG), 235–255 (IYGLGILAFIGFAVYQQKLIY), and 262–282 (CFTAFLNNNWAGMVLYIALTL).

The protein belongs to the UbiA prenyltransferase family. Mg(2+) serves as cofactor.

The protein localises to the cell inner membrane. The enzyme catalyses all-trans-octaprenyl diphosphate + 4-hydroxybenzoate = 4-hydroxy-3-(all-trans-octaprenyl)benzoate + diphosphate. The protein operates within cofactor biosynthesis; ubiquinone biosynthesis. Functionally, catalyzes the prenylation of para-hydroxybenzoate (PHB) with an all-trans polyprenyl group. Mediates the second step in the final reaction sequence of ubiquinone-8 (UQ-8) biosynthesis, which is the condensation of the polyisoprenoid side chain with PHB, generating the first membrane-bound Q intermediate 3-octaprenyl-4-hydroxybenzoate. The sequence is that of 4-hydroxybenzoate octaprenyltransferase from Shewanella halifaxensis (strain HAW-EB4).